We begin with the raw amino-acid sequence, 353 residues long: Uroporphyrinogen decarboxylase (353 aa).

Residues 29-33 (RQAGR), Asp78, Tyr154, Ser209, and His322 each bind substrate.

The protein belongs to the uroporphyrinogen decarboxylase family. As to quaternary structure, homodimer.

It localises to the cytoplasm. It carries out the reaction uroporphyrinogen III + 4 H(+) = coproporphyrinogen III + 4 CO2. The protein operates within porphyrin-containing compound metabolism; protoporphyrin-IX biosynthesis; coproporphyrinogen-III from 5-aminolevulinate: step 4/4. In terms of biological role, catalyzes the decarboxylation of four acetate groups of uroporphyrinogen-III to yield coproporphyrinogen-III. This is Uroporphyrinogen decarboxylase from Bacillus velezensis (strain DSM 23117 / BGSC 10A6 / LMG 26770 / FZB42) (Bacillus amyloliquefaciens subsp. plantarum).